The following is a 304-amino-acid chain: Acetylglutamate kinase (304 aa).

Residues 75–76 (GG), arginine 97, and asparagine 196 each bind substrate.

It belongs to the acetylglutamate kinase family. ArgB subfamily.

The protein resides in the cytoplasm. It carries out the reaction N-acetyl-L-glutamate + ATP = N-acetyl-L-glutamyl 5-phosphate + ADP. Its pathway is amino-acid biosynthesis; L-arginine biosynthesis; N(2)-acetyl-L-ornithine from L-glutamate: step 2/4. Catalyzes the ATP-dependent phosphorylation of N-acetyl-L-glutamate. In Corynebacterium urealyticum (strain ATCC 43042 / DSM 7109), this protein is Acetylglutamate kinase.